Here is a 472-residue protein sequence, read N- to C-terminus: Ulvan lyase (472 aa).

Positions 1 to 21 (MIIKQYLLKISLCVLLLGCDS) are cleaved as a signal peptide. Substrate is bound by residues Asn46 and Asn109. The active-site Proton donor is His110. The substrate site is built by Lys112 and His130. Tyr175 acts as the Proton acceptor in catalysis. Substrate is bound by residues Arg191, His195, and Tyr233. His195 provides a ligand contact to Zn(2+). Zn(2+) is bound by residues His251, Cys253, and His265. Residue His265 participates in substrate binding.

This sequence belongs to the polysaccharide lyase 25 family.

Functionally, ulvan lyase involved in ulvan degradation. Ulvan is the main polysaccharide component of the Ulvales (green seaweed) cell wall. It is composed of disaccharide building blocks comprising 3-sulfated rhamnose (Rha3S) linked to D-glucuronic acid (GlcA), L-iduronic acid (IduA), or D-xylose (Xyl). Ulvan lyase catalyzes the endolytic cleavage of the glycosidic bond between Rha3S and the uronic acids GlcA or IduA, producing oligosaccharides that have unsaturated 4-deoxy-L-threo-hex-4-enopyranosiduronic acid (deltaUA) at the non-reducing end. This results eventually in the degradation of the ulvan polysaccharide into deltaUA-Rha3S disaccharides and deltaUA-Rha3S-Xyl-Rha3S tetrasaccharides. The polypeptide is Ulvan lyase (Nonlabens ulvanivorans (Persicivirga ulvanivorans)).